A 599-amino-acid polypeptide reads, in one-letter code: Proteasome-associated ATPase (599 aa).

Residues 1-22 (MPHGHPGSQPDEGGELSNGSSS) are disordered. Residues 21–97 (SSGELTAQIR…LREEVDRLAQ (77 aa)) adopt a coiled-coil conformation. 286–291 (GCGKTL) is a binding site for ATP. The segment at 598–599 (YL) is docks into pockets in the proteasome alpha-ring.

The protein belongs to the AAA ATPase family. As to quaternary structure, homohexamer. Assembles into a hexameric ring structure that caps the 20S proteasome core. Strongly interacts with the prokaryotic ubiquitin-like protein Pup through a hydrophobic interface; the interacting region of ARC lies in its N-terminal coiled-coil domain. There is one Pup binding site per ARC hexamer ring. Upon ATP-binding, the C-terminus of ARC interacts with the alpha-rings of the proteasome core, possibly by binding to the intersubunit pockets.

The protein operates within protein degradation; proteasomal Pup-dependent pathway. ATPase which is responsible for recognizing, binding, unfolding and translocation of pupylated proteins into the bacterial 20S proteasome core particle. May be essential for opening the gate of the 20S proteasome via an interaction with its C-terminus, thereby allowing substrate entry and access to the site of proteolysis. Thus, the C-termini of the proteasomal ATPase may function like a 'key in a lock' to induce gate opening and therefore regulate proteolysis. This is Proteasome-associated ATPase from Actinosynnema mirum (strain ATCC 29888 / DSM 43827 / JCM 3225 / NBRC 14064 / NCIMB 13271 / NRRL B-12336 / IMRU 3971 / 101).